We begin with the raw amino-acid sequence, 958 residues long: Glycine dehydrogenase (decarboxylating) (958 aa).

An N6-(pyridoxal phosphate)lysine modification is found at K707.

Belongs to the GcvP family. As to quaternary structure, the glycine cleavage system is composed of four proteins: P, T, L and H. The cofactor is pyridoxal 5'-phosphate.

The catalysed reaction is N(6)-[(R)-lipoyl]-L-lysyl-[glycine-cleavage complex H protein] + glycine + H(+) = N(6)-[(R)-S(8)-aminomethyldihydrolipoyl]-L-lysyl-[glycine-cleavage complex H protein] + CO2. Its function is as follows. The glycine cleavage system catalyzes the degradation of glycine. The P protein binds the alpha-amino group of glycine through its pyridoxal phosphate cofactor; CO(2) is released and the remaining methylamine moiety is then transferred to the lipoamide cofactor of the H protein. The protein is Glycine dehydrogenase (decarboxylating) of Stutzerimonas stutzeri (strain A1501) (Pseudomonas stutzeri).